A 211-amino-acid polypeptide reads, in one-letter code: MTRVALTSAVNLAKKLQDAGIRNPAVLKAISQTPRELFLDNALAHKAYENTALPIGQGQTISQPYIVARMTELLLQHQPQKVLEVGTGSGYQAAILAQLVPELCTVERIKALQIQARQRLKRLDLHNVSFKYGDGWQGWLNRSPYNGIMVTAAAAKIPEALLSQLAEGGVLIIPVGEETQQLMRITRHSDRFSSEVIETVKFVPLVNGELA.

The active site involves Ser62.

Belongs to the methyltransferase superfamily. L-isoaspartyl/D-aspartyl protein methyltransferase family.

The protein localises to the cytoplasm. It carries out the reaction [protein]-L-isoaspartate + S-adenosyl-L-methionine = [protein]-L-isoaspartate alpha-methyl ester + S-adenosyl-L-homocysteine. Catalyzes the methyl esterification of L-isoaspartyl residues in peptides and proteins that result from spontaneous decomposition of normal L-aspartyl and L-asparaginyl residues. It plays a role in the repair and/or degradation of damaged proteins. The protein is Protein-L-isoaspartate O-methyltransferase of Shewanella oneidensis (strain ATCC 700550 / JCM 31522 / CIP 106686 / LMG 19005 / NCIMB 14063 / MR-1).